The primary structure comprises 461 residues: Elongation factor 1-alpha (461 aa).

Glycine 2 bears the N,N,N-trimethylglycine mark. Lysine 3 bears the N6,N6-dimethyllysine; alternate mark. Lysine 3 is modified (N6-methyllysine; alternate). One can recognise a tr-type G domain in the interval 6-241 (KTHINVVVIG…DSIEPPKRPT (236 aa)). The interval 15–22 (GHVDSGKS) is G1. Residue 15-22 (GHVDSGKS) participates in GTP binding. Lysine 31 is modified (N6-methyllysine). The G2 stretch occupies residues 71 to 75 (GITID). Lysine 80 carries the N6,N6,N6-trimethyllysine modification. A G3 region spans residues 92–95 (DAPG). GTP contacts are provided by residues 92-96 (DAPGH) and 154-157 (NKMD). Residues 154 to 157 (NKMD) are G4. The segment at 193-195 (SGF) is G5. Lysine 317 carries the N6,N6-dimethyllysine; alternate modification. Lysine 317 carries the post-translational modification N6-methyllysine; alternate. The residue at position 391 (lysine 391) is an N6-methyllysine.

It belongs to the TRAFAC class translation factor GTPase superfamily. Classic translation factor GTPase family. EF-Tu/EF-1A subfamily.

It is found in the cytoplasm. In terms of biological role, this protein promotes the GTP-dependent binding of aminoacyl-tRNA to the A-site of ribosomes during protein biosynthesis. The polypeptide is Elongation factor 1-alpha (TEF) (Pseudoechria curvicolla (Podospora curvicolla)).